Here is a 353-residue protein sequence, read N- to C-terminus: 3-isopropylmalate dehydrogenase (353 aa).

Residue 76–89 coordinates NAD(+); it reads GPKWDDPRAKVRPE. Residues R96, R106, R134, and D223 each contribute to the substrate site. Residues D223, D247, and D251 each coordinate Mg(2+). NAD(+) is bound at residue 281–293; that stretch reads GSAPDIAGKGIAN.

This sequence belongs to the isocitrate and isopropylmalate dehydrogenases family. LeuB type 1 subfamily. As to quaternary structure, homodimer. The cofactor is Mg(2+). Requires Mn(2+) as cofactor.

Its subcellular location is the cytoplasm. It carries out the reaction (2R,3S)-3-isopropylmalate + NAD(+) = 4-methyl-2-oxopentanoate + CO2 + NADH. It participates in amino-acid biosynthesis; L-leucine biosynthesis; L-leucine from 3-methyl-2-oxobutanoate: step 3/4. In terms of biological role, catalyzes the oxidation of 3-carboxy-2-hydroxy-4-methylpentanoate (3-isopropylmalate) to 3-carboxy-4-methyl-2-oxopentanoate. The product decarboxylates to 4-methyl-2 oxopentanoate. The protein is 3-isopropylmalate dehydrogenase of Anaeromyxobacter dehalogenans (strain 2CP-C).